Reading from the N-terminus, the 357-residue chain is Chaperone protein DnaJ (357 aa).

One can recognise a J domain in the interval 4–69 (DYYAILGVDR…QKRKQYDETG (66 aa)). A CR-type zinc finger spans residues 132-213 (GASKNVKYRR…CHGTGTVSKN (82 aa)). Zn(2+) contacts are provided by C145, C148, C161, C164, C187, C190, C201, and C204. 4 CXXCXGXG motif repeats span residues 145-152 (CEHCSGTG), 161-168 (CPTCHGSG), 187-194 (CRTCHGRG), and 201-208 (CTVCHGTG).

The protein belongs to the DnaJ family. Homodimer. Zn(2+) is required as a cofactor.

The protein resides in the cytoplasm. In terms of biological role, participates actively in the response to hyperosmotic and heat shock by preventing the aggregation of stress-denatured proteins and by disaggregating proteins, also in an autonomous, DnaK-independent fashion. Unfolded proteins bind initially to DnaJ; upon interaction with the DnaJ-bound protein, DnaK hydrolyzes its bound ATP, resulting in the formation of a stable complex. GrpE releases ADP from DnaK; ATP binding to DnaK triggers the release of the substrate protein, thus completing the reaction cycle. Several rounds of ATP-dependent interactions between DnaJ, DnaK and GrpE are required for fully efficient folding. Also involved, together with DnaK and GrpE, in the DNA replication of plasmids through activation of initiation proteins. The chain is Chaperone protein DnaJ from Picrophilus torridus (strain ATCC 700027 / DSM 9790 / JCM 10055 / NBRC 100828 / KAW 2/3).